The following is a 227-amino-acid chain: Adenylate kinase (227 aa).

21–26 (GAGKGT) serves as a coordination point for ATP. The NMP stretch occupies residues 41–70 (ATGDMLRSQVAKQTPLGIEAKKIMDDGKLV). AMP-binding positions include T42, R47, 68-70 (KLV), 97-100 (GFPR), and Q104. The segment at 138 to 175 (GRLVHPASGRSYHKVFNPPKTEMKDDITGEDLVQRSDD) is LID. Residues R139 and 148–149 (SY) each bind ATP. AMP contacts are provided by R172 and R183. Q211 provides a ligand contact to ATP.

Belongs to the adenylate kinase family. AK2 subfamily. As to quaternary structure, monomer.

Its subcellular location is the cytoplasm. The protein resides in the cytosol. The protein localises to the mitochondrion intermembrane space. It carries out the reaction AMP + ATP = 2 ADP. Catalyzes the reversible transfer of the terminal phosphate group between ATP and AMP. Plays an important role in cellular energy homeostasis and in adenine nucleotide metabolism. Adenylate kinase activity is critical for regulation of the phosphate utilization and the AMP de novo biosynthesis pathways. The sequence is that of Adenylate kinase from Kluyveromyces lactis (strain ATCC 8585 / CBS 2359 / DSM 70799 / NBRC 1267 / NRRL Y-1140 / WM37) (Yeast).